Consider the following 399-residue polypeptide: 1-deoxy-D-xylulose 5-phosphate reductoisomerase (399 aa).

Residues Thr13, Gly14, Ser15, Ile16, and Asn127 each coordinate NADPH. 1-deoxy-D-xylulose 5-phosphate is bound at residue Lys128. Glu129 lines the NADPH pocket. Asp153 serves as a coordination point for Mn(2+). Positions 154, 155, 187, and 210 each coordinate 1-deoxy-D-xylulose 5-phosphate. Mn(2+) is bound at residue Glu155. NADPH is bound at residue Gly216. 4 residues coordinate 1-deoxy-D-xylulose 5-phosphate: Ser223, Asn228, Lys229, and Glu232. Glu232 is a binding site for Mn(2+).

This sequence belongs to the DXR family. Requires Mg(2+) as cofactor. It depends on Mn(2+) as a cofactor.

The enzyme catalyses 2-C-methyl-D-erythritol 4-phosphate + NADP(+) = 1-deoxy-D-xylulose 5-phosphate + NADPH + H(+). It functions in the pathway isoprenoid biosynthesis; isopentenyl diphosphate biosynthesis via DXP pathway; isopentenyl diphosphate from 1-deoxy-D-xylulose 5-phosphate: step 1/6. Catalyzes the NADPH-dependent rearrangement and reduction of 1-deoxy-D-xylulose-5-phosphate (DXP) to 2-C-methyl-D-erythritol 4-phosphate (MEP). This Bordetella pertussis (strain Tohama I / ATCC BAA-589 / NCTC 13251) protein is 1-deoxy-D-xylulose 5-phosphate reductoisomerase.